Here is a 316-residue protein sequence, read N- to C-terminus: Transaldolase (316 aa).

Lys132 serves as the catalytic Schiff-base intermediate with substrate.

Belongs to the transaldolase family. Type 1 subfamily. Homodimer.

The protein resides in the cytoplasm. It catalyses the reaction D-sedoheptulose 7-phosphate + D-glyceraldehyde 3-phosphate = D-erythrose 4-phosphate + beta-D-fructose 6-phosphate. It functions in the pathway carbohydrate degradation; pentose phosphate pathway; D-glyceraldehyde 3-phosphate and beta-D-fructose 6-phosphate from D-ribose 5-phosphate and D-xylulose 5-phosphate (non-oxidative stage): step 2/3. Transaldolase is important for the balance of metabolites in the pentose-phosphate pathway. This is Transaldolase from Aliivibrio fischeri (strain MJ11) (Vibrio fischeri).